A 363-amino-acid chain; its full sequence is Replication factor C subunit 4 (363 aa).

An N-acetylmethionine modification is found at M1. A disordered region spans residues 1–36 (MQAFLKGTSISTKPPLTKDRGVAASAGSSGENKKAK). An N6-acetyllysine mark is found at K6 and K13. Residue 78-85 (GPPGTGKT) coordinates ATP.

The protein belongs to the activator 1 small subunits family. In terms of assembly, subunit of the RFC complex, an heteropentameric complex consisting of a large subunit RFC1 and four small subunits RFC2, RFC3, RFC4 and RFC5; the RFC complex interacts with PCNA. Forms an heterotetrameric complex with RFC2, RFC3 and RFC5; this complex has ATPase activity but is not stimulated by PCNA. The heterotetramer of subunits RFC2, RFC3, RFC4 and RFC5 interacts with RAD17. Interacts with ATAD5. Interacts with CTF18. Interacts with CNTD1; this interaction facilitates crossover formation.

It is found in the nucleus. In terms of biological role, subunit of the replication factor C (RFC) complex which acts during elongation of primed DNA templates by DNA polymerases delta and epsilon, and is necessary for ATP-dependent loading of proliferating cell nuclear antigen (PCNA) onto primed DNA. The RFC4 subunit probably functions as a scaffold on which the other complex components can assemble. The polypeptide is Replication factor C subunit 4 (RFC4) (Homo sapiens (Human)).